Reading from the N-terminus, the 414-residue chain is Tyrosine--tRNA ligase (414 aa).

An L-tyrosine-binding site is contributed by Y38. A 'HIGH' region motif is present at residues 43–52; it reads PTAISLHLGN. Residues Y165 and Q169 each coordinate L-tyrosine. The short motif at 227-231 is the 'KMSKS' region element; it reads KIGKS. ATP is bound at residue K230. One can recognise an S4 RNA-binding domain in the interval 349-413; it reads DDLFLTLVDS…KGKKQYWVIY (65 aa).

The protein belongs to the class-I aminoacyl-tRNA synthetase family. TyrS type 1 subfamily. In terms of assembly, homodimer.

Its subcellular location is the cytoplasm. It catalyses the reaction tRNA(Tyr) + L-tyrosine + ATP = L-tyrosyl-tRNA(Tyr) + AMP + diphosphate + H(+). Functionally, catalyzes the attachment of tyrosine to tRNA(Tyr) in a two-step reaction: tyrosine is first activated by ATP to form Tyr-AMP and then transferred to the acceptor end of tRNA(Tyr). The sequence is that of Tyrosine--tRNA ligase from Mycoplasmopsis pulmonis (strain UAB CTIP) (Mycoplasma pulmonis).